Consider the following 443-residue polypeptide: D(2) dopamine receptor (443 aa).

The Extracellular segment spans residues 1–37 (MDPLNLSWYDDDLESQNWSRPFNGSEGKPGKPHYNYY). 3 N-linked (GlcNAc...) asparagine glycosylation sites follow: asparagine 5, asparagine 17, and asparagine 23. Residues 38–60 (AMLLTLLIFIIVFGNVLVCMAVS) traverse the membrane as a helical segment. The Cytoplasmic segment spans residues 61-70 (REKALQTTTN). The chain crosses the membrane as a helical span at residues 71 to 93 (YLIVSLAVADLLVATLVMPWVVY). At 94–108 (LEVVGEWKFSRIHCD) the chain is on the extracellular side. A disulfide bond links cysteine 107 and cysteine 182. Residues 109–130 (IFVTLDVMMCTASILNLCAISI) traverse the membrane as a helical segment. The Cytoplasmic segment spans residues 131-151 (DRYTAVAMPMLYNTRYSSKRR). A helical transmembrane segment spans residues 152–172 (VTVMIAIVWVLSFTISCPLLF). Residues 173–188 (GLNNTDQNECIIANPA) are Extracellular-facing. The helical transmembrane segment at 189–213 (FVVYSSIVSFYVPFIVTLLVYIKIY) threads the bilayer. Positions 211–373 (KIYIVLRRRR…SQQKEKKATQ (163 aa)) are interaction with PPP1R9B. The Cytoplasmic portion of the chain corresponds to 214–373 (IVLRRRRKRV…SQQKEKKATQ (160 aa)). The tract at residues 282–332 (EMLSSTSPPERTRYSPIPPSHHQLTLPDPSHHGLHSTADSPAKPEKNGHAK) is disordered. Positions 323-332 (AKPEKNGHAK) are enriched in basic and acidic residues. Residues 374–395 (MLAIVLGVFIICWLPFFITHIL) form a helical membrane-spanning segment. Over 396 to 409 (NIHCECNIPPVLYS) the chain is Extracellular. A disulfide bond links cysteine 399 and cysteine 401. A helical membrane pass occupies residues 410-431 (AFTWLGYVNSAVNPIIYTTFNI). The Cytoplasmic portion of the chain corresponds to 432 to 443 (EFRKAFLKILHC). Cysteine 443 carries the S-palmitoyl cysteine lipid modification.

This sequence belongs to the G-protein coupled receptor 1 family. Forms homo- and heterooligomers with DRD4. The interaction with DRD4 may modulate agonist-induced downstream signaling. Interacts with CADPS and CADPS2. Interacts with GPRASP1, PPP1R9B and CLIC6. Interacts with ARRB2. Interacts with HTR2A. Interacts with DRD1. Interacts with KCNA2. Post-translationally, palmitoylated. Palmitoylation which is required for proper localization to the plasma membrane and stability of the receptor could be carried on by ZDHHC4, ZDHHC3 and ZDHHC8.

It is found in the cell membrane. Its subcellular location is the golgi apparatus membrane. Functionally, dopamine receptor whose activity is mediated by G proteins which inhibit adenylyl cyclase. Positively regulates postnatal regression of retinal hyaloid vessels via suppression of VEGFR2/KDR activity, downstream of OPN5. This chain is D(2) dopamine receptor (DRD2), found in Canis lupus familiaris (Dog).